The primary structure comprises 406 residues: Probable peptidoglycan glycosyltransferase FtsW (406 aa).

9 consecutive transmembrane segments (helical) span residues 22-42 (LWFVMSLIAILALGIVMVASA), 56-76 (FFMGRQILYLILGVSFGFMML), 86-106 (WGILLMLLSLVLLVLVLVPGI), 116-136 (WINLIVFNLQASEVAKVCMVV), 153-173 (LIGFALPLFLTSLFLIFLLME), 186-206 (VIALLFIGGAPVYQFIAIVIM), 280-300 (IWVEEMGLLGGVVLLSLFALM), 318-338 (FAGYMCFGFAILILAQVIINV), and 352-372 (LPLISYGGSSLIITLGSLFVV). Over residues 383–397 (SKGGESEERKRKSDE) the composition is skewed to basic and acidic residues. Residues 383-406 (SKGGESEERKRKSDESIDDGEALA) are disordered.

Belongs to the SEDS family. FtsW subfamily.

It is found in the cell inner membrane. It catalyses the reaction [GlcNAc-(1-&gt;4)-Mur2Ac(oyl-L-Ala-gamma-D-Glu-L-Lys-D-Ala-D-Ala)](n)-di-trans,octa-cis-undecaprenyl diphosphate + beta-D-GlcNAc-(1-&gt;4)-Mur2Ac(oyl-L-Ala-gamma-D-Glu-L-Lys-D-Ala-D-Ala)-di-trans,octa-cis-undecaprenyl diphosphate = [GlcNAc-(1-&gt;4)-Mur2Ac(oyl-L-Ala-gamma-D-Glu-L-Lys-D-Ala-D-Ala)](n+1)-di-trans,octa-cis-undecaprenyl diphosphate + di-trans,octa-cis-undecaprenyl diphosphate + H(+). Its pathway is cell wall biogenesis; peptidoglycan biosynthesis. Its function is as follows. Peptidoglycan polymerase that is essential for cell division. The chain is Probable peptidoglycan glycosyltransferase FtsW from Marinomonas mediterranea (strain ATCC 700492 / JCM 21426 / NBRC 103028 / MMB-1).